A 603-amino-acid polypeptide reads, in one-letter code: Flavin-dependent halogenase chlA (603 aa).

FAD is bound by residues G16, A19, and E59. Positions 352 and 353 each coordinate chloride.

Belongs to the flavin-dependent halogenase family.

It catalyses the reaction 2,4,6-trihydroxyphenylhexan-1-one + FADH2 + chloride + O2 = (3-chloro-2,4,6-trihydroxyphenyl)hexan-1-one + FAD + 2 H2O + H(+). The catalysed reaction is (3-chloro-2,4,6-trihydroxyphenyl)hexan-1-one + FADH2 + chloride + O2 = (3,5-dichloro-2,4,6-trihydroxyphenyl)hexan-1-one + FAD + 2 H2O. Functionally, flavin-dependent halogenase; part of the gene cluster that mediates the biosynthesis of DIF-1 (Differentiation Inducing Factor-1), a signal molecule involved in the differentiation of pstO (prestalk-O) cells. The three-step process begins with the formation of (2,4,6-trihydroxyphenyl)-1-hexan-1-one (THPH) by the polyketide synthase StlB. THPH is then dichlorinated by the flavin-dependent halogenase ChlA. The last step of DIF-1 biosynthesis is the O-methylation of dichloro-THPH (or des-methyl-DIF-1) by the methyltransferase DmtA to yield DIF-1. This Dictyostelium discoideum (Social amoeba) protein is Flavin-dependent halogenase chlA.